The chain runs to 189 residues: Segregation and condensation protein B (189 aa).

It belongs to the ScpB family. As to quaternary structure, homodimer. Homodimerization may be required to stabilize the binding of ScpA to the Smc head domains. Component of a cohesin-like complex composed of ScpA, ScpB and the Smc homodimer, in which ScpA and ScpB bind to the head domain of Smc. The presence of the three proteins is required for the association of the complex with DNA.

It localises to the cytoplasm. Participates in chromosomal partition during cell division. May act via the formation of a condensin-like complex containing Smc and ScpA that pull DNA away from mid-cell into both cell halves. The chain is Segregation and condensation protein B from Lachnoclostridium phytofermentans (strain ATCC 700394 / DSM 18823 / ISDg) (Clostridium phytofermentans).